A 39-amino-acid polypeptide reads, in one-letter code: Natriuretic peptide HsNP-a (39 aa).

The propeptide occupies 1–8; it reads SGSKTAKI. Cysteine 12 and cysteine 28 are oxidised to a cystine.

It belongs to the natriuretic peptide family. Expressed by the venom gland.

Its subcellular location is the secreted. In terms of biological role, snake venom natriuretic peptide that targets both NPR1 and NPR2. Exhibits hypotensive and vasodepressor activities. This is Natriuretic peptide HsNP-a from Hoplocephalus stephensii (Stephens's banded snake).